We begin with the raw amino-acid sequence, 437 residues long: GTPase Obg (437 aa).

Residues 2–160 (SMFLDTAKIK…RNLELELKVL (159 aa)) enclose the Obg domain. An OBG-type G domain is found at 161-338 (ADVGLVGFPS…LLEATAELLE (178 aa)). Residues 167 to 174 (GFPSVGKS), 192 to 196 (FTTIV), 214 to 217 (DLPG), 284 to 287 (NKMD), and 319 to 321 (SGI) each bind GTP. Ser-174 and Thr-194 together coordinate Mg(2+). The OCT domain occupies 359 to 437 (GFNPDEPEFA…IGKFEFEFVD (79 aa)).

It belongs to the TRAFAC class OBG-HflX-like GTPase superfamily. OBG GTPase family. Monomer. It depends on Mg(2+) as a cofactor.

The protein resides in the cytoplasm. An essential GTPase which binds GTP, GDP and possibly (p)ppGpp with moderate affinity, with high nucleotide exchange rates and a fairly low GTP hydrolysis rate. Plays a role in control of the cell cycle, stress response, ribosome biogenesis and in those bacteria that undergo differentiation, in morphogenesis control. This Streptococcus suis (strain 98HAH33) protein is GTPase Obg.